Reading from the N-terminus, the 729-residue chain is Leucine-rich repeat flightless-interacting protein 1 (729 aa).

An N-acetylthreonine modification is found at threonine 2. Position 16 is a phosphoserine (serine 16). Basic and acidic residues predominate over residues isoleucine 40 to serine 65. The disordered stretch occupies residues isoleucine 40–glutamate 98. The span at serine 78 to serine 94 shows a compositional bias: low complexity. Phosphoserine is present on residues serine 83, serine 84, serine 88, aspartate 90, serine 92, and threonine 97. Positions serine 94–lysine 194 form a coiled coil. Lysine 249 is covalently cross-linked (Glycyl lysine isopeptide (Lys-Gly) (interchain with G-Cter in SUMO1)). Residues valine 253–serine 729 form a disordered region. Residues glutamate 260–proline 272 are compositionally biased toward polar residues. Basic and acidic residues predominate over residues aspartate 277–glutamate 297. Residue serine 302 is modified to Phosphoserine. Residues glutamine 313–leucine 326 show a composition bias toward polar residues. A compositionally biased stretch (basic and acidic residues) spans lysine 327–serine 343. Positions arginine 344–cysteine 354 are enriched in polar residues. Residues serine 346 and serine 348 each carry the phosphoserine modification. Composition is skewed to basic and acidic residues over residues lysine 435 to leucine 445 and lysine 482 to isoleucine 494. Positions glutamate 465 to proline 567 are DNA-binding. The segment covering isoleucine 506–glutamine 523 has biased composition (polar residues). Phosphoserine occurs at positions 538 and 547. Over residues lysine 550 to alanine 564 the composition is skewed to basic residues. Over residues glutamine 608–valine 618 the composition is skewed to basic and acidic residues. Residues serine 614 and serine 670 each carry the phosphoserine modification. 2 stretches are compositionally biased toward polar residues: residues cysteine 667–glycine 684 and leucine 693–glycine 710. Basic and acidic residues predominate over residues alanine 713 to serine 729.

Belongs to the LRRFIP family. In terms of assembly, homodimer. May also form higher oligomers. Interacts with FLII. Interacts with MYD88. Competes with FLII for MyD88-binding, even in the absence of LPS. Ubiquitously expressed.

It is found in the nucleus. Its subcellular location is the cytoplasm. In terms of biological role, transcriptional repressor which preferentially binds to the GC-rich consensus sequence (5'-AGCCCCCGGCG-3') and may regulate expression of TNF, EGFR and PDGFA. May control smooth muscle cells proliferation following artery injury through PDGFA repression. May also bind double-stranded RNA. Positively regulates Toll-like receptor (TLR) signaling in response to agonist probably by competing with the negative FLII regulator for MYD88-binding. The sequence is that of Leucine-rich repeat flightless-interacting protein 1 (Lrrfip1) from Mus musculus (Mouse).